A 182-amino-acid chain; its full sequence is Nucleoside triphosphate/diphosphate phosphatase (182 aa).

Arg-27 functions as the Proton donor in the catalytic mechanism. 6 residues coordinate Mg(2+): Asn-91, Asp-107, Asp-109, Asp-111, Asp-124, and Glu-127.

This sequence belongs to the Ntdp family. Requires Mg(2+) as cofactor.

It carries out the reaction a ribonucleoside 5'-triphosphate + H2O = a ribonucleoside 5'-diphosphate + phosphate + H(+). It catalyses the reaction a ribonucleoside 5'-diphosphate + H2O = a ribonucleoside 5'-phosphate + phosphate + H(+). Functionally, has nucleoside phosphatase activity towards nucleoside triphosphates and nucleoside diphosphates. The chain is Nucleoside triphosphate/diphosphate phosphatase from Lactiplantibacillus plantarum (strain ATCC BAA-793 / NCIMB 8826 / WCFS1) (Lactobacillus plantarum).